Here is a 95-residue protein sequence, read N- to C-terminus: Putative pterin-4-alpha-carbinolamine dehydratase (95 aa).

Belongs to the pterin-4-alpha-carbinolamine dehydratase family.

It catalyses the reaction (4aS,6R)-4a-hydroxy-L-erythro-5,6,7,8-tetrahydrobiopterin = (6R)-L-erythro-6,7-dihydrobiopterin + H2O. The sequence is that of Putative pterin-4-alpha-carbinolamine dehydratase from Nocardia farcinica (strain IFM 10152).